A 498-amino-acid chain; its full sequence is ATP synthase subunit beta, chloroplastic (498 aa).

172–179 (GGAGVGKT) lines the ATP pocket.

This sequence belongs to the ATPase alpha/beta chains family. As to quaternary structure, F-type ATPases have 2 components, CF(1) - the catalytic core - and CF(0) - the membrane proton channel. CF(1) has five subunits: alpha(3), beta(3), gamma(1), delta(1), epsilon(1). CF(0) has four main subunits: a(1), b(1), b'(1) and c(9-12).

Its subcellular location is the plastid. It is found in the chloroplast thylakoid membrane. It carries out the reaction ATP + H2O + 4 H(+)(in) = ADP + phosphate + 5 H(+)(out). In terms of biological role, produces ATP from ADP in the presence of a proton gradient across the membrane. The catalytic sites are hosted primarily by the beta subunits. This chain is ATP synthase subunit beta, chloroplastic, found in Nicotiana tomentosiformis (Tobacco).